A 498-amino-acid polypeptide reads, in one-letter code: ATP synthase subunit beta, chloroplastic (498 aa).

172–179 (GGAGVGKT) is an ATP binding site.

The protein belongs to the ATPase alpha/beta chains family. F-type ATPases have 2 components, CF(1) - the catalytic core - and CF(0) - the membrane proton channel. CF(1) has five subunits: alpha(3), beta(3), gamma(1), delta(1), epsilon(1). CF(0) has four main subunits: a(1), b(1), b'(1) and c(9-12).

The protein resides in the plastid. The protein localises to the chloroplast thylakoid membrane. The catalysed reaction is ATP + H2O + 4 H(+)(in) = ADP + phosphate + 5 H(+)(out). In terms of biological role, produces ATP from ADP in the presence of a proton gradient across the membrane. The catalytic sites are hosted primarily by the beta subunits. This chain is ATP synthase subunit beta, chloroplastic, found in Magnolia tripetala (Umbrella-tree).